The chain runs to 360 residues: BOLA class I histocompatibility antigen, alpha chain BL3-6 (360 aa).

The signal sequence occupies residues 1–21 (MGPRALLLLLSGVLILTETRA). The interval 22–111 (GSHSLRYFST…LRGYYNQSEA (90 aa)) is alpha-1. The Extracellular segment spans residues 22–308 (GSHSLRYFST…QPSFLTMGII (287 aa)). Residue N107 is glycosylated (N-linked (GlcNAc...) asparagine). The interval 112–203 (GSHTLQWMSG…ENGKDTLLRA (92 aa)) is alpha-2. Disulfide bonds link C122-C185 and C224-C280. Residues 204–295 (DPPKAHVTHH…GLQEPLTLRW (92 aa)) form an alpha-3 region. Residues 206–292 (PKAHVTHHPI…QHEGLQEPLT (87 aa)) form the Ig-like C1-type domain. A connecting peptide region spans residues 296–308 (EPPQPSFLTMGII). Residues 309 to 328 (VGLVLLVVTGAVVAGVVICM) traverse the membrane as a helical segment. Topologically, residues 329–360 (KKRSGEKGGNYIQASSSDSAQGSDVSLTVPKV) are cytoplasmic. The tract at residues 340–360 (IQASSSDSAQGSDVSLTVPKV) is disordered. The segment covering 341–354 (QASSSDSAQGSDVS) has biased composition (low complexity). Phosphoserine is present on residues S351 and S354.

This sequence belongs to the MHC class I family. In terms of assembly, heterodimer of an alpha chain and a beta chain (beta-2-microglobulin).

Its subcellular location is the membrane. Functionally, involved in the presentation of foreign antigens to the immune system. The sequence is that of BOLA class I histocompatibility antigen, alpha chain BL3-6 from Bos taurus (Bovine).